We begin with the raw amino-acid sequence, 405 residues long: Arginine biosynthesis bifunctional protein ArgJ (405 aa).

Substrate contacts are provided by threonine 152, lysine 178, threonine 189, glutamate 276, asparagine 400, and threonine 405. The active-site Nucleophile is the threonine 189.

This sequence belongs to the ArgJ family. Heterotetramer of two alpha and two beta chains.

It localises to the cytoplasm. The enzyme catalyses N(2)-acetyl-L-ornithine + L-glutamate = N-acetyl-L-glutamate + L-ornithine. It catalyses the reaction L-glutamate + acetyl-CoA = N-acetyl-L-glutamate + CoA + H(+). It participates in amino-acid biosynthesis; L-arginine biosynthesis; L-ornithine and N-acetyl-L-glutamate from L-glutamate and N(2)-acetyl-L-ornithine (cyclic): step 1/1. Its pathway is amino-acid biosynthesis; L-arginine biosynthesis; N(2)-acetyl-L-ornithine from L-glutamate: step 1/4. Its function is as follows. Catalyzes two activities which are involved in the cyclic version of arginine biosynthesis: the synthesis of N-acetylglutamate from glutamate and acetyl-CoA as the acetyl donor, and of ornithine by transacetylation between N(2)-acetylornithine and glutamate. The polypeptide is Arginine biosynthesis bifunctional protein ArgJ (Pseudomonas putida (strain ATCC 47054 / DSM 6125 / CFBP 8728 / NCIMB 11950 / KT2440)).